The primary structure comprises 167 residues: Cytochrome c-type biogenesis protein CcmE (167 aa).

The Cytoplasmic portion of the chain corresponds to 1-7; sequence MTRKTRR. The chain crosses the membrane as a helical; Signal-anchor for type II membrane protein span at residues 8–28; sequence LWIVIACLACVGSAAALTLRA. At 29-167 the chain is on the periplasmic side; that stretch reads FSSNIVFFMA…DTMTAKKAGG (139 aa). Residues His-125 and Tyr-129 each contribute to the heme site. Basic and acidic residues predominate over residues 141–150; that stretch reads TGKWDPRFGK. A disordered region spans residues 141–167; it reads TGKWDPRFGKAPDASSWDTMTAKKAGG.

The protein belongs to the CcmE/CycJ family.

The protein localises to the cell inner membrane. In terms of biological role, heme chaperone required for the biogenesis of c-type cytochromes. Transiently binds heme delivered by CcmC and transfers the heme to apo-cytochromes in a process facilitated by CcmF and CcmH. In Gluconobacter oxydans (strain 621H) (Gluconobacter suboxydans), this protein is Cytochrome c-type biogenesis protein CcmE.